The sequence spans 474 residues: tRNA-2-methylthio-N(6)-dimethylallyladenosine synthase (474 aa).

One can recognise an MTTase N-terminal domain in the interval 3–120; it reads KKLHIKTWGC…LPDMIEQVRR (118 aa). [4Fe-4S] cluster is bound by residues cysteine 12, cysteine 49, cysteine 83, cysteine 157, cysteine 161, and cysteine 164. Residues 143-375 enclose the Radical SAM core domain; that stretch reads RAEGPTAFVS…QDRITQQAMR (233 aa). Residues 378-441 form the TRAM domain; sequence RHMMGTVQRI…TNSLRGKFIR (64 aa).

This sequence belongs to the methylthiotransferase family. MiaB subfamily. As to quaternary structure, monomer. Requires [4Fe-4S] cluster as cofactor.

The protein localises to the cytoplasm. The enzyme catalyses N(6)-dimethylallyladenosine(37) in tRNA + (sulfur carrier)-SH + AH2 + 2 S-adenosyl-L-methionine = 2-methylsulfanyl-N(6)-dimethylallyladenosine(37) in tRNA + (sulfur carrier)-H + 5'-deoxyadenosine + L-methionine + A + S-adenosyl-L-homocysteine + 2 H(+). Its function is as follows. Catalyzes the methylthiolation of N6-(dimethylallyl)adenosine (i(6)A), leading to the formation of 2-methylthio-N6-(dimethylallyl)adenosine (ms(2)i(6)A) at position 37 in tRNAs that read codons beginning with uridine. In Shewanella putrefaciens (strain CN-32 / ATCC BAA-453), this protein is tRNA-2-methylthio-N(6)-dimethylallyladenosine synthase.